The following is a 107-amino-acid chain: L-rhamnose mutarotase (107 aa).

Residue Tyr18 participates in substrate binding. The active-site Proton donor is His22. Substrate contacts are provided by residues Tyr41 and 76 to 77; that span reads WW.

Belongs to the rhamnose mutarotase family. In terms of assembly, homodimer.

It is found in the cytoplasm. It catalyses the reaction alpha-L-rhamnose = beta-L-rhamnose. Its pathway is carbohydrate metabolism; L-rhamnose metabolism. Its function is as follows. Involved in the anomeric conversion of L-rhamnose. This Paraburkholderia phytofirmans (strain DSM 17436 / LMG 22146 / PsJN) (Burkholderia phytofirmans) protein is L-rhamnose mutarotase.